A 261-amino-acid chain; its full sequence is Small ribosomal subunit protein uS2 (261 aa).

This sequence belongs to the universal ribosomal protein uS2 family.

The chain is Small ribosomal subunit protein uS2 from Enterococcus faecalis (strain ATCC 700802 / V583).